Reading from the N-terminus, the 121-residue chain is Large ribosomal subunit protein uL18 (121 aa).

The protein belongs to the universal ribosomal protein uL18 family. As to quaternary structure, part of the 50S ribosomal subunit; part of the 5S rRNA/L5/L18/L25 subcomplex. Contacts the 5S and 23S rRNAs.

Functionally, this is one of the proteins that bind and probably mediate the attachment of the 5S RNA into the large ribosomal subunit, where it forms part of the central protuberance. This Albidiferax ferrireducens (strain ATCC BAA-621 / DSM 15236 / T118) (Rhodoferax ferrireducens) protein is Large ribosomal subunit protein uL18.